A 359-amino-acid polypeptide reads, in one-letter code: Peptide chain release factor 1 (359 aa).

Gln-236 is modified (N5-methylglutamine).

The protein belongs to the prokaryotic/mitochondrial release factor family. In terms of processing, methylated by PrmC. Methylation increases the termination efficiency of RF1.

Its subcellular location is the cytoplasm. Functionally, peptide chain release factor 1 directs the termination of translation in response to the peptide chain termination codons UAG and UAA. The chain is Peptide chain release factor 1 (prfA) from Mycoplasma genitalium (strain ATCC 33530 / DSM 19775 / NCTC 10195 / G37) (Mycoplasmoides genitalium).